The sequence spans 526 residues: Glucose-6-phosphate 1-dehydrogenase (526 aa).

NADP(+) is bound by residues 50-57 (GASGDLAK), Arg-84, and Lys-184. D-glucose 6-phosphate is bound by residues Lys-184, 214–218 (HYLGK), Glu-252, and Asp-271. The Proton acceptor role is filled by His-276. Residue Arg-370 coordinates NADP(+). Lys-373 and Arg-378 together coordinate D-glucose 6-phosphate. NADP(+) contacts are provided by Lys-379, Arg-383, and Arg-406. Gln-408 is a D-glucose 6-phosphate binding site. NADP(+)-binding positions include 414 to 416 (YFK), 434 to 436 (DLT), Arg-500, Tyr-516, and Trp-522.

This sequence belongs to the glucose-6-phosphate dehydrogenase family.

It is found in the cytoplasm. It localises to the cytosol. It catalyses the reaction D-glucose 6-phosphate + NADP(+) = 6-phospho-D-glucono-1,5-lactone + NADPH + H(+). Its pathway is carbohydrate degradation; pentose phosphate pathway; D-ribulose 5-phosphate from D-glucose 6-phosphate (oxidative stage): step 1/3. In terms of biological role, cytosolic glucose-6-phosphate dehydrogenase that catalyzes the first and rate-limiting step of the oxidative branch within the pentose phosphate pathway/shunt, an alternative route to glycolysis for the dissimilation of carbohydrates and a major source of reducing power and metabolic intermediates for fatty acid and nucleic acid biosynthetic processes. The protein is Glucose-6-phosphate 1-dehydrogenase (ZW) of Ceratitis capitata (Mediterranean fruit fly).